The following is a 1446-amino-acid chain: Centrosomal protein of 164 kDa (1446 aa).

The interaction with ATRIP stretch occupies residues 1-195 (MARRPILLGD…PPQGLKAAAC (195 aa)). Residues 56–89 (APLPKGWKPCQNITGDLYYFNFDTGQSIWDHPCD) form the WW domain. Disordered stretches follow at residues 106–132 (PGAI…SKSP) and 159–185 (PPSA…EPTL). The segment covering 109 to 121 (IKKKDKKKKKEKK) has biased composition (basic residues). The segment covering 164-176 (RGSQSVSLGSSAD) has biased composition (polar residues). S202 bears the Phosphoserine mark. Disordered stretches follow at residues 217 to 238 (EETN…SSEL), 250 to 408 (GGNF…SFLG), 424 to 570 (GDTL…EPAA), and 830 to 849 (KRQE…KEEH). Positions 218-228 (ETNEEDEEESD) are enriched in acidic residues. A compositionally biased stretch (basic and acidic residues) spans 257–277 (ESPRTSQPDKKDVSLDSDADR). Residues 288-312 (GADSSVASANGSKSQGRGASPWNPQ) show a composition bias toward polar residues. 2 stretches are compositionally biased toward basic and acidic residues: residues 355 to 372 (KEGE…KEAS) and 384 to 397 (SEIH…RHSG). The span at 451–461 (SSIAEPQSKHT) shows a compositional bias: polar residues. 2 stretches are compositionally biased toward basic and acidic residues: residues 490 to 499 (PEWKEAEGPG) and 525 to 534 (ERAEEKHSQA). Positions 1143 to 1197 (EVLGNMRKNLNEETRHLDEMKSAMRKGHDLLKKKEEKLIQLESSLQEEVSDEDTL) form a coiled coil. Residues 1261–1287 (LGSLNSQPPPQGLGSQPPPPLFTSSLR) form a disordered region. The span at 1267–1281 (QPPPQGLGSQPPPPL) shows a compositional bias: pro residues. Phosphoserine is present on residues S1369 and S1371.

In terms of assembly, interacts (via N-terminus) with ATRIP. Interacts with ATM, ATR and MDC1. Interacts with XPA (via N-terminus) upon UV irradiation. Interacts with CEP83, CCDC92, TTBK2, DVL3, NPHP3 and weakly with NPHP4. Interacts with DZIP1.

It localises to the cytoplasm. It is found in the cytoskeleton. The protein resides in the microtubule organizing center. Its subcellular location is the centrosome. The protein localises to the centriole. It localises to the nucleus. Functionally, plays a role in microtubule organization and/or maintenance for the formation of primary cilia (PC), a microtubule-based structure that protrudes from the surface of epithelial cells. Plays a critical role in G2/M checkpoint and nuclear divisions. A key player in the DNA damage-activated ATR/ATM signaling cascade since it is required for the proper phosphorylation of H2AX, RPA, CHEK2 and CHEK1. Plays a critical role in chromosome segregation, acting as a mediator required for the maintenance of genomic stability through modulation of MDC1, RPA and CHEK1. The sequence is that of Centrosomal protein of 164 kDa from Mus musculus (Mouse).